The sequence spans 35 residues: Photosystem II reaction center protein M (35 aa).

A helical transmembrane segment spans residues 7–27 (GFLASLLFVLVPSVFLIVLYI).

Belongs to the PsbM family. PSII is composed of 1 copy each of membrane proteins PsbA, PsbB, PsbC, PsbD, PsbE, PsbF, PsbH, PsbI, PsbJ, PsbK, PsbL, PsbM, PsbT, PsbX, PsbY, PsbZ, Psb30/Ycf12, peripheral proteins PsbO, CyanoQ (PsbQ), PsbU, PsbV and a large number of cofactors. It forms dimeric complexes.

The protein localises to the cellular thylakoid membrane. Its function is as follows. One of the components of the core complex of photosystem II (PSII). PSII is a light-driven water:plastoquinone oxidoreductase that uses light energy to abstract electrons from H(2)O, generating O(2) and a proton gradient subsequently used for ATP formation. It consists of a core antenna complex that captures photons, and an electron transfer chain that converts photonic excitation into a charge separation. This subunit is found at the monomer-monomer interface. The protein is Photosystem II reaction center protein M of Synechococcus elongatus (strain ATCC 33912 / PCC 7942 / FACHB-805) (Anacystis nidulans R2).